The chain runs to 231 residues: DNA damage response protein C (231 aa).

In terms of assembly, homodimer.

It localises to the cytoplasm. It is found in the nucleoid. Functionally, appears to contribute to D.radiodurans capacity to survive exposure to ionizing radiation. Likely functions as a DNA damage-induced nucleoid-associated protein (NAP) that contributes to the enhanced level of nucleoid compaction after irradiation by bridging DNA duplexes, thereby limiting the dispersion of the fragmented genome immediately after irradiation to facilitate subsequent DNA repair. In vitro, binds both ssDNA and dsDNA, and is able to compact circular DNA, circularize linear DNA, anneal complementary DNA strands and protect DNA from nucleases. The sequence is that of DNA damage response protein C from Deinococcus radiodurans (strain ATCC 13939 / DSM 20539 / JCM 16871 / CCUG 27074 / LMG 4051 / NBRC 15346 / NCIMB 9279 / VKM B-1422 / R1).